We begin with the raw amino-acid sequence, 53 residues long: Chlorophyll a-b binding protein 1, chloroplastic (53 aa).

Chlorophyll b is bound at residue Phe-18. Glu-48 and His-51 together coordinate chlorophyll a. Residue Arg-53 coordinates chlorophyll b.

This sequence belongs to the light-harvesting chlorophyll a/b-binding (LHC) protein family. As to quaternary structure, the LHC complex consists of chlorophyll a-b binding proteins. Binds at least 14 chlorophylls (8 Chl-a and 6 Chl-b) and carotenoids such as lutein and neoxanthin. is required as a cofactor. Photoregulated by reversible phosphorylation of its threonine residues.

It localises to the plastid. The protein localises to the chloroplast thylakoid membrane. In terms of biological role, the light-harvesting complex (LHC) functions as a light receptor, it captures and delivers excitation energy to photosystems with which it is closely associated. In Populus euphratica (Euphrates poplar), this protein is Chlorophyll a-b binding protein 1, chloroplastic.